The sequence spans 37 residues: Large ribosomal subunit protein bL36c (37 aa).

It belongs to the bacterial ribosomal protein bL36 family.

Its subcellular location is the plastid. This Aneura mirabilis (Parasitic liverwort) protein is Large ribosomal subunit protein bL36c.